Here is a 450-residue protein sequence, read N- to C-terminus: Protein tailless (450 aa).

The segment at residues 31–108 is a DNA-binding region (nuclear receptor); sequence HVPCKVCRDH…VGMNKDAVQH (78 aa). 2 consecutive NR C4-type zinc fingers follow at residues 34 to 54 and 70 to 96; these read CKVC…CDGC and CKSQ…LRKC. The region spanning 187–448 is the NR LBD domain; the sequence is VPRVPHHPVH…RLISDMYSQR (262 aa).

Belongs to the nuclear hormone receptor family. NR2 subfamily. As to quaternary structure, monomer.

It is found in the nucleus. Its function is as follows. Orphan receptor that binds DNA as a monomer to hormone response elements (HRE) containing an extended core motif half-site sequence 5'-AAGTCA-3' in which the 5' flanking nucleotides participate in determining receptor specificity. This receptor binds to the consensus sequence [AG][AG]AAGTCAA. Plays a key role in the establishment of non-metameric domains at the anterior and posterior poles of the embryo. It may also play a role in the nervous system. The maternal terminal pathway activates the tll gene in the termini; TLL activity then represses segmentation and activates terminal-specific genes in these domains. Involved in the regulation of early eye development. In the embryonic visual system anlage drives cells to optic lobe as opposed to Bolwig's organ fate. The polypeptide is Protein tailless (tll) (Drosophila virilis (Fruit fly)).